The sequence spans 211 residues: uncharacterized protein (211 aa).

The N-terminal stretch at 1–27 (MKRTSAALVVFLILLFLGLLFLPMFIV) is a signal peptide.

This is an uncharacterized protein from Archaeoglobus fulgidus (strain ATCC 49558 / DSM 4304 / JCM 9628 / NBRC 100126 / VC-16).